The following is a 254-amino-acid chain: Probable septum site-determining protein MinC (254 aa).

It belongs to the MinC family. As to quaternary structure, interacts with MinD and FtsZ.

In terms of biological role, cell division inhibitor that blocks the formation of polar Z ring septums. Rapidly oscillates between the poles of the cell to destabilize FtsZ filaments that have formed before they mature into polar Z rings. Prevents FtsZ polymerization. This chain is Probable septum site-determining protein MinC, found in Burkholderia ambifaria (strain ATCC BAA-244 / DSM 16087 / CCUG 44356 / LMG 19182 / AMMD) (Burkholderia cepacia (strain AMMD)).